The sequence spans 428 residues: Histidine--tRNA ligase (428 aa).

This sequence belongs to the class-II aminoacyl-tRNA synthetase family. Homodimer.

It is found in the cytoplasm. The enzyme catalyses tRNA(His) + L-histidine + ATP = L-histidyl-tRNA(His) + AMP + diphosphate + H(+). This is Histidine--tRNA ligase (hisS) from Chlamydia muridarum (strain MoPn / Nigg).